The following is a 271-amino-acid chain: Nuclear egress protein 2 (271 aa).

Residues 1-249 (MSVVGKRVVD…LGRAVALVRR (249 aa)) are Perinuclear space-facing. A helical membrane pass occupies residues 250 to 267 (SWPWISAGIAFLCLGLVW). At 268–271 (MRPS) the chain is on the nuclear side.

Belongs to the herpesviridae NEC2 protein family. As to quaternary structure, forms a heterohexameric complex with NEC1. In terms of processing, phosphorylated.

It is found in the host nucleus inner membrane. Its function is as follows. Plays an essential role in virion nuclear egress, the first step of virion release from infected cell. Within the host nucleus, NEC1 interacts with the newly formed capsid through the vertexes and directs it to the inner nuclear membrane by associating with NEC2. Induces the budding of the capsid at the inner nuclear membrane as well as its envelopment into the perinuclear space. There, the NEC1/NEC2 complex promotes the fusion of the enveloped capsid with the outer nuclear membrane and the subsequent release of the viral capsid into the cytoplasm where it will reach the secondary budding sites in the host Golgi or trans-Golgi network. This Homo sapiens (Human) protein is Nuclear egress protein 2.